A 935-amino-acid polypeptide reads, in one-letter code: MTELKAKGXRAPHVAGSPSSPKVXSPLPCRQAAXPFPGSQTSDTLPEVSALPISLDGLLFPRICQGQDPPDEKTQDQQSLSDVEGAYSRVEATRGAGGSSSRPPEKDSGLLDSVLDTLWAPSGPGQSQPSPPACEVTSSWCLFGPELPEDPPGTSATQRVLSRLMSRSGGKAGDSSGMAAAHKVLPRGLSPSRQLLLPTTGSPHWSGAPVKPSPQSAALEVEEEDGSESEDSAGPLLKGKPRALGGAAAGGGAAAVPPGAXAGGIALVPKEDSCFSAPRVALVEQDAPMAPGRSPLATTVTDFIHVPILPLSHALLAARTRQLLEDESYDGGAGAASAFAPPRSSPSASSTPVPGGDFPDCAYAPDAEPKDDAYPVYGDFQPPALKIKEEEEGAEASARSPRSYLVAGASPAAFPDFPLGPPPPLPPRAPPSRPGEAAVTAAPASASVSSASSSGSTLECILYKAEGAPPQQGPFAPPPCKAPGAGGCLLPRDSLPSTSASAAATAAGAAPALYPALGLNGLPQLGYQAAVLKEGLPQVYPPYLNYLRPDSEASQSPQYSFESLPQKICLICGDEASGCHYGVLTCGSCKVFFKRAMEGQHNYLCAGRNDCIVDKIRRKNCPACRLRKCCQAGMVLGGRKFKKFNKVRVMRALDAVALPQPVGIPNENQALSQRFTFSPNQDIQLIPPLINLLLSIEPDVIYAGHDHTKPDTSSSLLTSLNQLGERQLLSVVKWSKSLPGFRNLHIDDQITLIQYSWMSLMVFGLGWRSYKHVSGQMLYFAPDLILNEQRMKESSFYSLCLTMWQIPQEFVKLQVSQEEFLCMKVLLLLNTIPLEGLRSQTQFEEMRSSYIRELIKAIGLRQKGVVPSSQRFYQLTKLLDNLHDLVKQLHLYCLNTFIQSRALSVEFPEMMSEVIAAQLPKILAGMVKPLLFHKK.

The segment at 1–49 is disordered; it reads MTELKAKGXRAPHVAGSPSSPKVXSPLPCRQAAXPFPGSQTSDTLPEVS. Positions 1–164 are AF3; mediates transcriptional activation; sequence MTELKAKGXR…SATQRVLSRL (164 aa). The interval 1–568 is modulating, Pro-Rich; that stretch reads MTELKAKGXR…YSFESLPQKI (568 aa). Positions 17–28 are enriched in low complexity; that stretch reads SPSSPKVXSPLP. The residue at position 20 (serine 20) is a Phosphoserine. The LXXL motif 1 signature appears at 55–59; it reads LDGLL. The disordered stretch occupies residues 61 to 255; the sequence is PRICQGQDPP…GAAAGGGAAA (195 aa). Serine 81 carries the post-translational modification Phosphoserine. Positions 115–119 match the LXXL motif 2 motif; sequence LDTLW. A phosphoserine mark is found at serine 130 and serine 162. The interval 165-305 is mediates transcriptional transrepression; sequence MSRSGGKAGD…LATTVTDFIH (141 aa). The Nuclear localization signal signature appears at 183-187; the sequence is KVLPR. Serine 190 carries the post-translational modification Phosphoserine. The segment covering 191 to 203 has biased composition (polar residues); the sequence is PSRQLLLPTTGSP. Serine 213 is subject to Phosphoserine. The span at 220-231 shows a compositional bias: acidic residues; the sequence is EVEEEDGSESED. Over residues 232-246 the composition is skewed to low complexity; the sequence is SAGPLLKGKPRALGG. Position 294 is a phosphoserine; by MAPK1 (serine 294). Positions 331-365 are disordered; that stretch reads GGAGAASAFAPPRSSPSASSTPVPGGDFPDCAYAP. Positions 335–356 are enriched in low complexity; it reads AASAFAPPRSSPSASSTPVPGG. Position 345 is a phosphoserine; by MAPK (serine 345). Lysine 388 is covalently cross-linked (Glycyl lysine isopeptide (Lys-Gly) (interchain with G-Cter in SUMO); alternate). Lysine 388 is covalently cross-linked (Glycyl lysine isopeptide (Lys-Gly) (interchain with G-Cter in ubiquitin); alternate). At serine 400 the chain carries Phosphoserine; by CDK2. Residues 415–452 form a disordered region; it reads PDFPLGPPPPLPPRAPPSRPGEAAVTAAPASASVSSAS. Residues 418–433 are compositionally biased toward pro residues; it reads PLGPPPPLPPRAPPSR. Residues 434 to 452 are compositionally biased toward low complexity; it reads PGEAAVTAAPASASVSSAS. An AF1; mediates transcriptional activation region spans residues 456-548; sequence STLECILYKA…VYPPYLNYLR (93 aa). Lysine 533 is covalently cross-linked (Glycyl lysine isopeptide (Lys-Gly) (interchain with G-Cter in SUMO)). 2 NR C4-type zinc fingers span residues 569-589 and 605-629; these read CLICGDEASGCHYGVLTCGSC and CAGRNDCIVDKIRRKNCPACRLRKC. The nuclear receptor DNA-binding region spans 569-641; it reads CLICGDEASG…AGMVLGGRKF (73 aa). Serine 678 carries the phosphoserine modification. The region spanning 681–915 is the NR LBD domain; sequence QDIQLIPPLI…EFPEMMSEVI (235 aa). The interval 689 to 935 is AF2; mediates transcriptional activation; it reads LINLLLSIEP…MVKPLLFHKK (247 aa).

It belongs to the nuclear hormone receptor family. Interacts with SMARD1 and UNC45A. Interacts with CUEDC2; the interaction promotes ubiquitination, decreases sumoylation, and represses transcriptional activity. Interacts with PIAS3; the interaction promotes sumoylation of PR in a hormone-dependent manner, inhibits DNA-binding, and alters nuclear export. Interacts with SP1; the interaction requires ligand-induced phosphorylation on Ser-345 by ERK1/2-MAPK. Interacts with PRMT2. Interacts with NCOA2 and NCOA1. Interacts with KLF9. Interacts with GTF2B. In terms of processing, phosphorylated on multiple serine sites. Several of these sites are hormone-dependent. Phosphorylation on Ser-294 is highly hormone-dependent and modulates ubiquitination and sumoylation on Lys-388. Phosphorylation on Ser-345 also requires induction by hormone. Basal phosphorylation on Ser-81, Ser-162, Ser-190 and Ser-400 is increased in response to progesterone and can be phosphorylated in vitro by the CDK2-A1 complex. Increased levels of phosphorylation on Ser-400 also in the presence of EGF, heregulin, IGF, PMA and FBS. Phosphorylation at this site by CDK2 is ligand-independent, and increases nuclear translocation and transcriptional activity. Phosphorylation at Ser-162 and Ser-294, but not at Ser-190, is impaired during the G(2)/M phase of the cell cycle. Phosphorylation on Ser-345 by ERK1/2 MAPK is required for interaction with SP1. Post-translationally, sumoylation is hormone-dependent and represses transcriptional activity. Sumoylation on all three sites is enhanced by PIAS3. Desumoylated by SENP1. Sumoylation on Lys-388, the main site of sumoylation, is repressed by ubiquitination on the same site, and modulated by phosphorylation at Ser-294. Ubiquitination is hormone-dependent and represses sumoylation on the same site. Promoted by MAPK-mediated phosphorylation on Ser-294. In terms of processing, palmitoylated by ZDHHC7 and ZDHHC21. Palmitoylation is required for plasma membrane targeting and for rapid intracellular signaling via ERK and AKT kinases and cAMP generation.

It localises to the nucleus. The protein localises to the cytoplasm. Its function is as follows. The steroid hormones and their receptors are involved in the regulation of eukaryotic gene expression and affect cellular proliferation and differentiation in target tissues. Transcriptional activator of several progesteron-dependent promoters in a variety of cell types. Involved in activation of SRC-dependent MAPK signaling on hormone stimulation. The chain is Progesterone receptor (PGR) from Ateles paniscus (Black spider monkey).